The primary structure comprises 207 residues: MANYDVLKVDGSKSGSVELNDAVFAIEPNNSVLFEAINLQRASLRQGTHAVKNRSAVRGGGRKPWRQKGTGRARQGTIRAPQWRGGGVVFGPTPRSYAYKMPKKMRRLALRSALSFKVQENSFTIVDTFGFEAPKTKEFKNVLTTLEQPKKVLVVTENEDVNVELSARNIPGVQVTTAQGLNVLDLTSADSVIITEAAAKKVEEVLA.

The disordered stretch occupies residues 55-75 (SAVRGGGRKPWRQKGTGRARQ). Residues 60–71 (GGRKPWRQKGTG) show a composition bias toward basic residues.

Belongs to the universal ribosomal protein uL4 family. As to quaternary structure, part of the 50S ribosomal subunit.

In terms of biological role, one of the primary rRNA binding proteins, this protein initially binds near the 5'-end of the 23S rRNA. It is important during the early stages of 50S assembly. It makes multiple contacts with different domains of the 23S rRNA in the assembled 50S subunit and ribosome. Its function is as follows. Forms part of the polypeptide exit tunnel. The polypeptide is Large ribosomal subunit protein uL4 (Staphylococcus epidermidis (strain ATCC 35984 / DSM 28319 / BCRC 17069 / CCUG 31568 / BM 3577 / RP62A)).